The sequence spans 307 residues: 4-hydroxythreonine-4-phosphate dehydrogenase (307 aa).

Residues His126 and Thr127 each coordinate substrate. His156, His195, and His251 together coordinate a divalent metal cation. Substrate contacts are provided by Lys259, Asn268, and Arg277.

Belongs to the PdxA family. As to quaternary structure, homodimer. Zn(2+) serves as cofactor. Mg(2+) is required as a cofactor. Requires Co(2+) as cofactor.

The protein resides in the cytoplasm. It carries out the reaction 4-(phosphooxy)-L-threonine + NAD(+) = 3-amino-2-oxopropyl phosphate + CO2 + NADH. Its pathway is cofactor biosynthesis; pyridoxine 5'-phosphate biosynthesis; pyridoxine 5'-phosphate from D-erythrose 4-phosphate: step 4/5. Catalyzes the NAD(P)-dependent oxidation of 4-(phosphooxy)-L-threonine (HTP) into 2-amino-3-oxo-4-(phosphooxy)butyric acid which spontaneously decarboxylates to form 3-amino-2-oxopropyl phosphate (AHAP). This chain is 4-hydroxythreonine-4-phosphate dehydrogenase, found in Helicobacter pylori (strain Shi470).